Reading from the N-terminus, the 368-residue chain is Alanine racemase (368 aa).

K40 functions as the Proton acceptor; specific for D-alanine in the catalytic mechanism. K40 carries the N6-(pyridoxal phosphate)lysine modification. R136 is a substrate binding site. Residue Y263 is the Proton acceptor; specific for L-alanine of the active site. Residue M310 coordinates substrate.

This sequence belongs to the alanine racemase family. It depends on pyridoxal 5'-phosphate as a cofactor.

It carries out the reaction L-alanine = D-alanine. Its pathway is amino-acid biosynthesis; D-alanine biosynthesis; D-alanine from L-alanine: step 1/1. In terms of biological role, catalyzes the interconversion of L-alanine and D-alanine. May also act on other amino acids. The protein is Alanine racemase (alr) of Streptococcus uberis (strain ATCC BAA-854 / 0140J).